The chain runs to 239 residues: Probable transcriptional regulatory protein Aave_3203 (239 aa).

Residues 1 to 20 form a disordered region; it reads MAGHSKWANIQHRKGRQDEK.

Belongs to the TACO1 family.

It is found in the cytoplasm. The chain is Probable transcriptional regulatory protein Aave_3203 from Paracidovorax citrulli (strain AAC00-1) (Acidovorax citrulli).